The sequence spans 356 residues: Biotin synthase (356 aa).

One can recognise a Radical SAM core domain in the interval 51–270; it reads NKVQCNQLLN…IALARIMMPL (220 aa). Cysteine 66, cysteine 70, and cysteine 73 together coordinate [4Fe-4S] cluster. The [2Fe-2S] cluster site is built by cysteine 110, cysteine 141, cysteine 201, and arginine 274. The disordered stretch occupies residues 310–356; it reads PGDNKDRSLFDRLGLEPRDDHGVHEHSSHSHTHDQGHDHGPHGHSHG. Positions 312-350 are enriched in basic and acidic residues; it reads DNKDRSLFDRLGLEPRDDHGVHEHSSHSHTHDQGHDHGP.

The protein belongs to the radical SAM superfamily. Biotin synthase family. In terms of assembly, homodimer. It depends on [4Fe-4S] cluster as a cofactor. The cofactor is [2Fe-2S] cluster.

It carries out the reaction (4R,5S)-dethiobiotin + (sulfur carrier)-SH + 2 reduced [2Fe-2S]-[ferredoxin] + 2 S-adenosyl-L-methionine = (sulfur carrier)-H + biotin + 2 5'-deoxyadenosine + 2 L-methionine + 2 oxidized [2Fe-2S]-[ferredoxin]. The protein operates within cofactor biosynthesis; biotin biosynthesis; biotin from 7,8-diaminononanoate: step 2/2. Functionally, catalyzes the conversion of dethiobiotin (DTB) to biotin by the insertion of a sulfur atom into dethiobiotin via a radical-based mechanism. This Rhodopseudomonas palustris (strain BisB18) protein is Biotin synthase.